Reading from the N-terminus, the 159-residue chain is Cyclic pyranopterin monophosphate synthase (159 aa).

Residues 75–77 (LCH) and 113–114 (ME) each bind substrate. Residue D128 is part of the active site.

Belongs to the MoaC family. Homohexamer; trimer of dimers.

The enzyme catalyses (8S)-3',8-cyclo-7,8-dihydroguanosine 5'-triphosphate = cyclic pyranopterin phosphate + diphosphate. The protein operates within cofactor biosynthesis; molybdopterin biosynthesis. Catalyzes the conversion of (8S)-3',8-cyclo-7,8-dihydroguanosine 5'-triphosphate to cyclic pyranopterin monophosphate (cPMP). The polypeptide is Cyclic pyranopterin monophosphate synthase (Heliobacterium modesticaldum (strain ATCC 51547 / Ice1)).